We begin with the raw amino-acid sequence, 382 residues long: Small ribosomal subunit protein bS1 homolog (382 aa).

S1 motif domains are found at residues 18–85 (GDVV…LSKR), 103–168 (GHVF…LSHK), 189–257 (GDVV…LSIK), and 274–343 (GDIR…LSIK). Position 244 is a phosphoserine (Ser-244).

It belongs to the bacterial ribosomal protein bS1 family.

This Bacillus cereus (strain ATCC 10987 / NRS 248) protein is Small ribosomal subunit protein bS1 homolog.